A 662-amino-acid chain; its full sequence is Serine/threonine kinase-like domain-containing protein STKLD1 (662 aa).

A Protein kinase domain is found at 1 to 202; the sequence is MLNPGALGVN…ILDMATCSFL (202 aa). Residues 2–10 and K25 contribute to the ATP site; that span reads LNPGALGVN. A disordered region spans residues 639–662; it reads LQEDQLEPPAGQEAPLQGEPLFRP.

It belongs to the protein kinase superfamily. Ser/Thr protein kinase family. STKL subfamily.

This Mus musculus (Mouse) protein is Serine/threonine kinase-like domain-containing protein STKLD1 (Stkld1).